We begin with the raw amino-acid sequence, 304 residues long: Secreted mono- and diacylglycerol lipase LIP1 (304 aa).

Positions 1–19 (MLFSRFVLLAFGSVAAVSA) are cleaved as a signal peptide. Thr-32 is a glycosylation site (O-linked (Man...) threonine). Residues Cys-57 and Cys-297 are joined by a disulfide bond. The active-site Nucleophile is the Ser-171. The active site involves Asp-228. A glycan (N-linked (GlcNAc...) asparagine) is linked at Asn-253. Residue His-281 is part of the active site.

Belongs to the AB hydrolase superfamily. Lipase family. Class 3 subfamily.

Its subcellular location is the secreted. It localises to the cell wall. The catalysed reaction is a monoacylglycerol + H2O = glycerol + a fatty acid + H(+). The enzyme catalyses a diacylglycerol + H2O = a monoacylglycerol + a fatty acid + H(+). With respect to regulation, RHC 80267, a well-known inhibitor of diacylglycerol lipases from mammals, also acts as an inhibitor for LIP1/SMG1. Functionally, secreted lipase involved in Dandruff and seborrheic dermatitis (D/SD) probably via lipase-mediated breakdown of sebaceous lipids and release of irritating free fatty acids. Shows activity against monoglyceride and diglyceride substrates, but not triglyceride substrates and does not exhibit regio-selective production of diacylglycerols. Able to hydrolyze diacylglycerols such as distearin, dilinolein, dipalmitoylglycerol and dipalmitolein. Cleaves oleic acid from 1,2 isomers of diolein on both the 1 and the 2 position of the glycerol backbone, resulting mainly in free fatty acids but no monoolein is detected. Shows activity on monoolein and liberates mostly free fatty acids, but can also perform the reverse reaction and produce diolein. The protein is Secreted mono- and diacylglycerol lipase LIP1 of Malassezia globosa (strain ATCC MYA-4612 / CBS 7966) (Dandruff-associated fungus).